A 187-amino-acid chain; its full sequence is Ion-translocating oxidoreductase complex subunit B (187 aa).

The hydrophobic stretch occupies residues methionine 1–alanine 26. Positions glutamate 32–valine 90 constitute a 4Fe-4S domain. Residues cysteine 49, cysteine 52, cysteine 57, cysteine 73, cysteine 115, cysteine 118, cysteine 121, cysteine 125, cysteine 145, cysteine 148, cysteine 151, and cysteine 155 each contribute to the [4Fe-4S] cluster site. 2 consecutive 4Fe-4S ferredoxin-type domains span residues lysine 106–lysine 135 and alanine 136–valine 165.

The protein belongs to the 4Fe4S bacterial-type ferredoxin family. RnfB subfamily. The complex is composed of six subunits: RnfA, RnfB, RnfC, RnfD, RnfE and RnfG. It depends on [4Fe-4S] cluster as a cofactor.

It localises to the cell inner membrane. Functionally, part of a membrane-bound complex that couples electron transfer with translocation of ions across the membrane. This Aeromonas salmonicida (strain A449) protein is Ion-translocating oxidoreductase complex subunit B.